A 361-amino-acid chain; its full sequence is U7 snRNA-associated Sm-like protein LSm11 (361 aa).

The tract at residues 1 to 26 (MEEREWGARSARAGSPASPPSPRLDV) is disordered. Residues S15 and S21 each carry the phosphoserine modification. At R41 the chain carries Omega-N-methylarginine. The interval 67 to 142 (RTGRGRARGT…QGPGRSKKAP (76 aa)) is disordered. Residues 76–96 (TGEPASAGTSTGTSTGAGSSS) are compositionally biased toward low complexity. K121 is covalently cross-linked (Glycyl lysine isopeptide (Lys-Gly) (interchain with G-Cter in SUMO2)). At S155 the chain carries Phosphoserine. A Sm domain is found at 155-230 (SPLGELHRCI…LTLTRLFDRL (76 aa)). Residues 172 to 205 (VHIRTFKGLRGVCTGFLVAFDKFWNMALTDVDET) are SM 1. Positions 268-335 (RGDTDRSSHR…RKKKRKPKVD (68 aa)) are disordered. S281 bears the Phosphoserine mark. The span at 307 to 323 (GSSVGGTFSRATTLSRG) shows a compositional bias: polar residues. The tract at residues 344–357 (INQIFIRGENVLLV) is SM 2.

This sequence belongs to the snRNP Sm proteins family. As to quaternary structure, component of the heptameric ring U7 snRNP complex, or U7 Sm protein core complex, at least composed of LSM10, LSM11, SNRPB, SNRPD3, SNRPE, SNRPF, SNRPG and U7 snRNA. Formation of the U7 snRNP is an ATP-dependent process mediated by a specialized SMN complex containing at least the Sm protein core complex and additionally, the U7-specific LSM10 and LSM11 proteins. Identified in a histone pre-mRNA complex, at least composed of ERI1, LSM11, SLBP, SNRPB, SYNCRIP and YBX1. Interacts (via the Sm domains) with CLNS1A. Interacts with PRMT5, SMN, ZNF473 and WDR77. Not methylated.

Its subcellular location is the nucleus. Its function is as follows. Component of the U7 snRNP complex that is involved in the histone 3'-end pre-mRNA processing. Increases U7 snRNA levels but not histone 3'-end pre-mRNA processing activity, when overexpressed. Required for cell cycle progression from G1 to S phases. Binds specifically to the Sm-binding site of U7 snRNA. This chain is U7 snRNA-associated Sm-like protein LSm11, found in Mus musculus (Mouse).